A 703-amino-acid polypeptide reads, in one-letter code: Lethal(3)malignant brain tumor-like protein 2 (703 aa).

Positions 1-85 are disordered; the sequence is MEKPRGTEEA…NNRSLDGSGS (85 aa). Phosphoserine is present on Ser13. The span at 15–25 shows a compositional bias: acidic residues; it reads PMEEEEEDDLD. Residues 35–49 are compositionally biased toward low complexity; sequence SYNSSAGSESSSYLE. Residues 50 to 60 show a composition bias toward acidic residues; that stretch reads ESSEAENEDRE. Ser67 bears the Phosphoserine mark. Residues 73 to 82 show a composition bias toward polar residues; it reads SSANNRSLDG. The FCS-type zinc-finger motif lies at 81–116; sequence DGSGSEPAVCEMCGIVGTREAFFSKTKRFCSVSCSR. The Zn(2+) site is built by Cys90, Cys93, Cys110, and Cys114. 4 MBT repeats span residues 179-283, 291-391, 397-500, and 508-604; these read FDWG…LVPP, TDWK…IKMS, MSHH…LTPP, and FAWE…LQPP. Ser338 carries the post-translational modification Phosphoserine. Lys405 is covalently cross-linked (Glycyl lysine isopeptide (Lys-Gly) (interchain with G-Cter in SUMO2)). The disordered stretch occupies residues 604–649; that stretch reads PVSAEPNTPQKGKDTTKKKKKQFGKKRKRIPSAKTRPLRQGSKKPL. Over residues 619-634 the composition is skewed to basic residues; sequence TKKKKKQFGKKRKRIP. Glycyl lysine isopeptide (Lys-Gly) (interchain with G-Cter in SUMO2) cross-links involve residues Lys647 and Lys673. The segment at 675-703 is disordered; sequence EHQDISSLDRSPSPQLPLPIESIKQERNN. Phosphoserine occurs at positions 681, 685, and 687. A Glycyl lysine isopeptide (Lys-Gly) (interchain with G-Cter in SUMO1); alternate cross-link involves residue Lys698. A Glycyl lysine isopeptide (Lys-Gly) (interchain with G-Cter in SUMO2); alternate cross-link involves residue Lys698.

In terms of assembly, part of the E2F6.com-1 complex in G0 phase composed of E2F6, MGA, MAX, TFDP1, CBX3, BAT8, EUHMTASE1, RING1, RNF2, MBLR, BAT8 and YAF2. Phosphorylated. As to expression, ubiquitous.

Its subcellular location is the nucleus. Functionally, putative Polycomb group (PcG) protein. PcG proteins maintain the transcriptionally repressive state of genes, probably via a modification of chromatin, rendering it heritably changed in its expressibility. Its association with a chromatin-remodeling complex suggests that it may contribute to prevent expression of genes that trigger the cell into mitosis. Binds to monomethylated and dimethylated 'Lys-20' on histone H4. Binds histone H3 peptides that are monomethylated or dimethylated on 'Lys-4', 'Lys-9' or 'Lys-27'. This Mus musculus (Mouse) protein is Lethal(3)malignant brain tumor-like protein 2 (L3mbtl2).